Consider the following 434-residue polypeptide: Histidinol dehydrogenase (434 aa).

Residues Tyr-130, Gln-188, and Asn-211 each contribute to the NAD(+) site. The substrate site is built by Ser-237, Gln-259, and His-262. 2 residues coordinate Zn(2+): Gln-259 and His-262. Residues Glu-326 and His-327 each act as proton acceptor in the active site. Substrate contacts are provided by His-327, Asp-360, Glu-414, and His-419. Asp-360 is a Zn(2+) binding site. His-419 lines the Zn(2+) pocket.

It belongs to the histidinol dehydrogenase family. Homodimer. It depends on Zn(2+) as a cofactor.

The enzyme catalyses L-histidinol + 2 NAD(+) + H2O = L-histidine + 2 NADH + 3 H(+). Its pathway is amino-acid biosynthesis; L-histidine biosynthesis; L-histidine from 5-phospho-alpha-D-ribose 1-diphosphate: step 9/9. Its function is as follows. Catalyzes the sequential NAD-dependent oxidations of L-histidinol to L-histidinaldehyde and then to L-histidine. The sequence is that of Histidinol dehydrogenase from Shigella sonnei (strain Ss046).